The primary structure comprises 475 residues: Ribulose bisphosphate carboxylase large chain (475 aa).

Residues 1-2 constitute a propeptide that is removed on maturation; the sequence is MS. Pro3 carries the N-acetylproline modification. Lys14 bears the N6,N6,N6-trimethyllysine mark. Residues Asn123 and Thr173 each contribute to the substrate site. Lys175 (proton acceptor) is an active-site residue. Residue Lys177 coordinates substrate. Mg(2+) contacts are provided by Lys201, Asp203, and Glu204. Position 201 is an N6-carboxylysine (Lys201). His294 serves as the catalytic Proton acceptor. Substrate is bound by residues Arg295, His327, and Ser379.

The protein belongs to the RuBisCO large chain family. Type I subfamily. In terms of assembly, heterohexadecamer of 8 large chains and 8 small chains; disulfide-linked. The disulfide link is formed within the large subunit homodimers. The cofactor is Mg(2+). Post-translationally, the disulfide bond which can form in the large chain dimeric partners within the hexadecamer appears to be associated with oxidative stress and protein turnover.

It is found in the plastid. The protein resides in the chloroplast. It carries out the reaction 2 (2R)-3-phosphoglycerate + 2 H(+) = D-ribulose 1,5-bisphosphate + CO2 + H2O. The catalysed reaction is D-ribulose 1,5-bisphosphate + O2 = 2-phosphoglycolate + (2R)-3-phosphoglycerate + 2 H(+). In terms of biological role, ruBisCO catalyzes two reactions: the carboxylation of D-ribulose 1,5-bisphosphate, the primary event in carbon dioxide fixation, as well as the oxidative fragmentation of the pentose substrate in the photorespiration process. Both reactions occur simultaneously and in competition at the same active site. This is Ribulose bisphosphate carboxylase large chain from Ostrya virginiana (American hophornbeam).